The sequence spans 512 residues: Envelope glycoprotein (512 aa).

A signal peptide spans 1–15 (MFLQTALLLLSLGVA). 5 N-linked (GlcNAc...) asparagine; by host glycosylation sites follow: N185, N263, N289, N378, and N416. The helical transmembrane segment at 479 to 502 (GQLGGLLYGNIGVYLLIAFAFVLL) threads the bilayer.

It localises to the virion membrane. In terms of biological role, attaches the virus to host cellular receptor and later induces fusion of virion with host membrane. The polypeptide is Envelope glycoprotein (Thogoto virus (isolate SiAr 126) (Tho)).